A 583-amino-acid polypeptide reads, in one-letter code: Glucosidase 2 subunit beta (583 aa).

The signal sequence occupies residues 1-26; it reads MVRLNLAVVALAAGALSASASASSSA. Cysteine 91 and cysteine 115 form a disulfide bridge. Positions 130–252 form a coiled coil; the sequence is NRCEKVGKEY…LTLLLDDLAK (123 aa). Residues 455 to 562 form the MRH domain; the sequence is NKCFSKDMGE…KVATPAVCFP (108 aa). 3 disulfide bridges follow: cysteine 457-cysteine 470, cysteine 519-cysteine 548, and cysteine 533-cysteine 560. Positions 580-583 match the Prevents secretion from ER motif; sequence KDEL.

In terms of assembly, heterodimer of a catalytic subunit alpha and a subunit beta.

The protein resides in the endoplasmic reticulum. Subunit of glucosidase 2, which cleaves sequentially the 2 innermost alpha-1,3-linked glucose residues from the Glc(2)Man(9)GlcNAc(2) oligosaccharide precursor of immature glycoproteins in the endoplasmic reticulum (ER). Specifically required for the cleavage of the final glucose. The subunit beta retains the catalytic subunit alpha in the ER. In Mycosarcoma maydis (Corn smut fungus), this protein is Glucosidase 2 subunit beta.